A 355-amino-acid chain; its full sequence is Blue-sensitive opsin (355 aa).

Topologically, residues 1 to 36 (MNGTEGINFYVPLSNKTGLVRSPFEYPQYYLAEPWK) are extracellular. N-linked (GlcNAc...) asparagine glycosylation is found at Asn2 and Asn15. The chain crosses the membrane as a helical span at residues 37-61 (YKVVCCYIFFLIFTGLPINILTLLV). At 62–73 (TFKHKKLRQPLN) the chain is on the cytoplasmic side. Residues 74-98 (YILVNLAVADLFMACFGFTVTFYTA) traverse the membrane as a helical segment. Residues 99 to 113 (WNGYFIFGPIGCAIE) lie on the Extracellular side of the membrane. Cys110 and Cys187 form a disulfide bridge. A helical transmembrane segment spans residues 114–133 (GFFATLGGQVALWSLVVLAI). Residues 134 to 152 (ERYIVVCKPMGNFRFSATH) lie on the Cytoplasmic side of the membrane. A helical transmembrane segment spans residues 153-176 (ALMGISFTWFMSFSCAAPPLLGWS). Over 177-202 (RYIPEGMQCSCGPDYYTLNPDYHNES) the chain is Extracellular. N-linked (GlcNAc...) asparagine glycosylation is present at Asn200. The chain crosses the membrane as a helical span at residues 203-230 (YVLYMFGVHFVIPVVVIFFSYGRLICKV). Topologically, residues 231-252 (REAAAQQQESASTQKAEREVTR) are cytoplasmic. A helical membrane pass occupies residues 253 to 276 (MVILMVLGFLLAWTPYAMVAFWIF). Over 277 to 284 (TNKGVDFS) the chain is Extracellular. A helical transmembrane segment spans residues 285–309 (ATLMSVPAFFSKSSSLYNPIIYVLM). Residue Lys296 is modified to N6-(retinylidene)lysine. Residues 310 to 355 (NKQFRNCMITTICCGKNPFGDEDVSSSVSQSKTEVSSVSSSQVSPA) lie on the Cytoplasmic side of the membrane. Residues Cys322 and Cys323 are each lipidated (S-palmitoyl cysteine). A disordered region spans residues 332 to 355 (DVSSSVSQSKTEVSSVSSSQVSPA). Over residues 334–355 (SSSVSQSKTEVSSVSSSQVSPA) the composition is skewed to low complexity.

It belongs to the G-protein coupled receptor 1 family. Opsin subfamily. Post-translationally, phosphorylated on some or all of the serine and threonine residues present in the C-terminal region.

Its subcellular location is the membrane. In terms of biological role, visual pigments are the light-absorbing molecules that mediate vision. They consist of an apoprotein, opsin, covalently linked to cis-retinal. This opsin uses a vitamin A2 chromophore. This chain is Blue-sensitive opsin, found in Anolis carolinensis (Green anole).